The sequence spans 179 residues: ADP-ribosylation factor (179 aa).

The N-myristoyl glycine moiety is linked to residue Gly-2. Residues 24–31 (GLDAAGKT), 67–71 (DVGGQ), and 126–129 (NKQD) each bind GTP.

Belongs to the small GTPase superfamily. Arf family.

Its subcellular location is the golgi apparatus. Its function is as follows. GTP-binding protein involved in protein trafficking; may modulate vesicle budding and uncoating within the Golgi apparatus. The polypeptide is ADP-ribosylation factor (ARF1) (Candida albicans (strain SC5314 / ATCC MYA-2876) (Yeast)).